A 307-amino-acid chain; its full sequence is Mycothiol acetyltransferase (307 aa).

2 N-acetyltransferase domains span residues 12 to 152 and 160 to 307; these read TRTD…APIP and VTLR…YQRS. Glutamate 43 contributes to the 1D-myo-inositol 2-(L-cysteinylamino)-2-deoxy-alpha-D-glucopyranoside binding site. Acetyl-CoA is bound at residue 87–89; the sequence is LAV. The 1D-myo-inositol 2-(L-cysteinylamino)-2-deoxy-alpha-D-glucopyranoside site is built by glutamate 187, lysine 227, and glutamate 239. Residues 243 to 245 and 250 to 256 each bind acetyl-CoA; these read LGV and HGGGLGK. Tyrosine 278 provides a ligand contact to 1D-myo-inositol 2-(L-cysteinylamino)-2-deoxy-alpha-D-glucopyranoside.

The protein belongs to the acetyltransferase family. MshD subfamily. Monomer.

It catalyses the reaction 1D-myo-inositol 2-(L-cysteinylamino)-2-deoxy-alpha-D-glucopyranoside + acetyl-CoA = mycothiol + CoA + H(+). Functionally, catalyzes the transfer of acetyl from acetyl-CoA to desacetylmycothiol (Cys-GlcN-Ins) to form mycothiol. The polypeptide is Mycothiol acetyltransferase (Salinispora arenicola (strain CNS-205)).